A 364-amino-acid polypeptide reads, in one-letter code: Flagellar P-ring protein (364 aa).

Positions 1-29 (MKTIGGKVFRHAAILAACVLPLWCQPALA) are cleaved as a signal peptide.

This sequence belongs to the FlgI family. In terms of assembly, the basal body constitutes a major portion of the flagellar organelle and consists of four rings (L,P,S, and M) mounted on a central rod.

The protein resides in the periplasm. It is found in the bacterial flagellum basal body. In terms of biological role, assembles around the rod to form the L-ring and probably protects the motor/basal body from shearing forces during rotation. This chain is Flagellar P-ring protein, found in Dechloromonas aromatica (strain RCB).